The following is a 467-amino-acid chain: Gamma-aminobutyric acid receptor subunit gamma-2 (467 aa).

A signal peptide spans 1–39 (MSSPNIWSTGSSVYSTPVFSQKMTVWILLLLSLYPGFTS). The Extracellular segment spans residues 40 to 275 (QKSDDDYEDY…FDLSRRMGYF (236 aa)). Residues Asn52 and Asn129 are each glycosylated (N-linked (GlcNAc...) asparagine). Cys190 and Cys204 are joined by a disulfide. An N-linked (GlcNAc...) asparagine glycan is attached at Asn247. Residues 276–296 (TIQTYIPCTLIVVLSWVSFWI) traverse the membrane as a helical segment. Residues 297-302 (NKDAVP) are Cytoplasmic-facing. A helical membrane pass occupies residues 303–322 (ARTSLGITTVLTMTTLSTIA). Residues 323–334 (RKSLPKVSYVTA) lie on the Extracellular side of the membrane. A helical membrane pass occupies residues 335-359 (MDLFVSVCFIFVFSALVEYGTLHYF). The Cytoplasmic portion of the chain corresponds to 360-443 (VSNRKPSKDK…IHIRIAKMDS (84 aa)). Residues 425 to 442 (RTGAWRHGRIHIRIAKMD) form an interaction with GABARAP region. A helical transmembrane segment spans residues 444–464 (YARIFFPTAFCLFNLVYWVSY). Residues 465–467 (LYL) lie on the Extracellular side of the membrane.

It belongs to the ligand-gated ion channel (TC 1.A.9) family. Gamma-aminobutyric acid receptor (TC 1.A.9.5) subfamily. GABRG2 sub-subfamily. Heteropentamer, formed by a combination of alpha (GABRA1-6), beta (GABRB1-3), gamma (GABRG1-3), delta (GABRD), epsilon (GABRE), rho (GABRR1-3), pi (GABRP) and theta (GABRQ) chains, each subunit exhibiting distinct physiological and pharmacological properties. Interacts with GABARAP. Interacts with KIF21B. Identified in a complex of 720 kDa composed of LHFPL4, NLGN2, GABRA1, GABRB2, GABRG2 and GABRB3. Interacts with LHFPL4. Interacts with SHISA7; interaction leads to the regulation of GABA(A) receptor trafficking, channel deactivation kinetics and pharmacology. Post-translationally, palmitoylated by ZDHHC3/GODZ; required for the accumulation of GABA(A) receptors at the postsynaptic membrane of inhibitory GABAergic synapses. In terms of processing, glycosylated.

The protein resides in the postsynaptic cell membrane. Its subcellular location is the cell membrane. It is found in the cell projection. It localises to the dendrite. The protein localises to the cytoplasmic vesicle membrane. The enzyme catalyses chloride(in) = chloride(out). Its activity is regulated as follows. Allosterically activated by benzodiazepines. Activated by pentobarbital. Inhibited by the antagonist bicuculline. Inhibited by zinc ions. Potentiated by histamine. Functionally, gamma subunit of the heteropentameric ligand-gated chloride channel gated by gamma-aminobutyric acid (GABA), a major inhibitory neurotransmitter in the brain. GABA-gated chloride channels, also named GABA(A) receptors (GABAAR), consist of five subunits arranged around a central pore and contain GABA active binding site(s) located at the alpha and beta subunit interface(s). When activated by GABA, GABAARs selectively allow the flow of chloride anions across the cell membrane down their electrochemical gradient. Gamma-2/GABRG2-containing GABAARs are found at both synaptic and extrasynaptic sites. Chloride influx into the postsynaptic neuron following GABAAR opening decreases the neuron ability to generate a new action potential, thereby reducing nerve transmission. GABAARs containing alpha-1 and beta-2 or -3 subunits exhibit synaptogenic activity; the gamma-2 subunit being necessary but not sufficient to induce rapid synaptic contacts formation. Extrasynaptic gamma-2-containing receptors contribute to the tonic GABAergic inhibition. GABAARs function also as histamine receptor where histamine binds at the interface of two neighboring beta subunits and potentiates GABA response in a gamma-2 subunit-controlled manner. The protein is Gamma-aminobutyric acid receptor subunit gamma-2 (GABRG2) of Pongo abelii (Sumatran orangutan).